We begin with the raw amino-acid sequence, 109 residues long: MSGVNNTSANDLSTTESNSNSAVGAPSVKTEHGDSKDSLNLDATEAPIDLPQKPLSAYTTVAILCLMIAFGGFIFGWDTGTISGFVNLSDFIRRFGQKKTTRGLTTYRK.

Over residues 1 to 22 (MSGVNNTSANDLSTTESNSNSA) the composition is skewed to polar residues. Residues 1–40 (MSGVNNTSANDLSTTESNSNSAVGAPSVKTEHGDSKDSLN) are disordered. The Cytoplasmic segment spans residues 1 to 56 (MSGVNNTSANDLSTTESNSNSAVGAPSVKTEHGDSKDSLNLDATEAPIDLPQKPLS). Residues 29-39 (KTEHGDSKDSL) are compositionally biased toward basic and acidic residues. A helical transmembrane segment spans residues 57–77 (AYTTVAILCLMIAFGGFIFGW). Residues 78–109 (DTGTISGFVNLSDFIRRFGQKKTTRGLTTYRK) lie on the Extracellular side of the membrane. The N-linked (GlcNAc...) asparagine glycan is linked to Asn-87.

This sequence belongs to the major facilitator superfamily. Sugar transporter (TC 2.A.1.1) family.

The protein localises to the cell membrane. Probable glucose transporter. The protein is Putative transporter-like protein YIL171W of Saccharomyces cerevisiae (strain ATCC 204508 / S288c) (Baker's yeast).